We begin with the raw amino-acid sequence, 392 residues long: Probable protein phosphatase 2C 78 (392 aa).

Residues 39 to 342 (ASGEYSIAVA…DDITVVVVYL (304 aa)) enclose the PPM-type phosphatase domain. Mn(2+)-binding residues include Asp73, Gly74, Asp274, and Asp333.

It belongs to the PP2C family. It depends on Mg(2+) as a cofactor. Mn(2+) is required as a cofactor.

It carries out the reaction O-phospho-L-seryl-[protein] + H2O = L-seryl-[protein] + phosphate. The catalysed reaction is O-phospho-L-threonyl-[protein] + H2O = L-threonyl-[protein] + phosphate. This is Probable protein phosphatase 2C 78 from Oryza sativa subsp. japonica (Rice).